Consider the following 400-residue polypeptide: PHD finger protein 24 (400 aa).

Gly-2 is lipidated: N-myristoyl glycine. Residues Asp-30 to Thr-108 form a disordered region. An Omega-N-methylarginine modification is found at Arg-36. Ser-43 is subject to Phosphoserine. Position 47 is a phosphothreonine (Thr-47). Ser-51 is modified (phosphoserine). Over residues Ala-78–Gly-97 the composition is skewed to basic and acidic residues. The PHD-type zinc-finger motif lies at Asn-129 to Asn-190.

In Pongo abelii (Sumatran orangutan), this protein is PHD finger protein 24.